The sequence spans 368 residues: UDP-N-acetylenolpyruvoylglucosamine reductase (368 aa).

Positions 32 to 199 (IGGKPRSAVR…LAIELQLLTD (168 aa)) constitute an FAD-binding PCMH-type domain. Arg177 is an active-site residue. Residue Ser257 is the Proton donor of the active site. The active site involves Glu358.

The protein belongs to the MurB family. FAD serves as cofactor.

It localises to the cytoplasm. The catalysed reaction is UDP-N-acetyl-alpha-D-muramate + NADP(+) = UDP-N-acetyl-3-O-(1-carboxyvinyl)-alpha-D-glucosamine + NADPH + H(+). The protein operates within cell wall biogenesis; peptidoglycan biosynthesis. Its function is as follows. Cell wall formation. The sequence is that of UDP-N-acetylenolpyruvoylglucosamine reductase from Corynebacterium glutamicum (strain R).